A 515-amino-acid chain; its full sequence is Bifunctional purine biosynthesis protein PurH (515 aa).

The 144-residue stretch at methionine 1–valine 144 folds into the MGS-like domain.

Belongs to the PurH family.

It catalyses the reaction (6R)-10-formyltetrahydrofolate + 5-amino-1-(5-phospho-beta-D-ribosyl)imidazole-4-carboxamide = 5-formamido-1-(5-phospho-D-ribosyl)imidazole-4-carboxamide + (6S)-5,6,7,8-tetrahydrofolate. It carries out the reaction IMP + H2O = 5-formamido-1-(5-phospho-D-ribosyl)imidazole-4-carboxamide. It participates in purine metabolism; IMP biosynthesis via de novo pathway; 5-formamido-1-(5-phospho-D-ribosyl)imidazole-4-carboxamide from 5-amino-1-(5-phospho-D-ribosyl)imidazole-4-carboxamide (10-formyl THF route): step 1/1. It functions in the pathway purine metabolism; IMP biosynthesis via de novo pathway; IMP from 5-formamido-1-(5-phospho-D-ribosyl)imidazole-4-carboxamide: step 1/1. The chain is Bifunctional purine biosynthesis protein PurH from Persephonella marina (strain DSM 14350 / EX-H1).